A 243-amino-acid polypeptide reads, in one-letter code: MSMLCYTLIIAFLIGIWAAPKSEDNVPLGSPAKSDFSDTNCAQTHEGLKTSRNTDQHHPTPKKSEDQELGSAANIIVDPKLFQKRRFQSPRVLFSTQPPPLSRDEQSVKFLDTEDTLNRNIWANNENHPVHNQGEHSVCDSISVWVTNKTKATDIKGNTVTVMVDVNLNNEVYKQYFFETKCRNPNPVPSGCRGIDSRHWNSYCTTTDTFVKALTMEGNRASWRFIRIDTACVCVISRKTENF.

Positions methionine 1–alanine 18 are cleaved as a signal peptide. The propeptide occupies alanine 19–asparagine 125. The span at glycine 47–aspartate 66 shows a compositional bias: basic and acidic residues. Positions glycine 47–glycine 70 are disordered. 3 cysteine pairs are disulfide-bonded: cysteine 139/cysteine 204, cysteine 182/cysteine 232, and cysteine 192/cysteine 234. Residue asparagine 148 is glycosylated (N-linked (GlcNAc...) asparagine).

It belongs to the NGF-beta family. Homodimer. As to expression, expressed by the venom gland.

The protein resides in the secreted. Functionally, nerve growth factor is important for the development and maintenance of the sympathetic and sensory nervous systems. It stimulates division and differentiation of sympathetic and embryonic sensory neurons as well as basal forebrain cholinergic neurons in the brain. Its relevance in the snake venom is not clear. However, it has been shown to inhibit metalloproteinase-dependent proteolysis of platelet glycoprotein Ib alpha, suggesting a metalloproteinase inhibition to prevent metalloprotease autodigestion and/or protection against prey proteases. Binds a lipid between the two protein chains in the homodimer. The lipid-bound form promotes histamine relase from mouse mast cells, contrary to the lipid-free form. This is Venom nerve growth factor from Bungarus multicinctus (Many-banded krait).